The following is a 271-amino-acid chain: Formamidopyrimidine-DNA glycosylase (271 aa).

Catalysis depends on Pro-2, which acts as the Schiff-base intermediate with DNA. Glu-3 functions as the Proton donor in the catalytic mechanism. Catalysis depends on Lys-57, which acts as the Proton donor; for beta-elimination activity. DNA is bound by residues His-90, Arg-109, and Lys-151. The FPG-type zinc-finger motif lies at 236 to 270 (HVYGRGGDTCTHCGQLLSEIRLGQRATVFCSICQQ). Catalysis depends on Arg-260, which acts as the Proton donor; for delta-elimination activity.

Belongs to the FPG family. In terms of assembly, monomer. Zn(2+) is required as a cofactor.

The enzyme catalyses Hydrolysis of DNA containing ring-opened 7-methylguanine residues, releasing 2,6-diamino-4-hydroxy-5-(N-methyl)formamidopyrimidine.. It carries out the reaction 2'-deoxyribonucleotide-(2'-deoxyribose 5'-phosphate)-2'-deoxyribonucleotide-DNA = a 3'-end 2'-deoxyribonucleotide-(2,3-dehydro-2,3-deoxyribose 5'-phosphate)-DNA + a 5'-end 5'-phospho-2'-deoxyribonucleoside-DNA + H(+). Functionally, involved in base excision repair of DNA damaged by oxidation or by mutagenic agents. Acts as a DNA glycosylase that recognizes and removes damaged bases. Has a preference for oxidized purines, such as 7,8-dihydro-8-oxoguanine (8-oxoG). Has AP (apurinic/apyrimidinic) lyase activity and introduces nicks in the DNA strand. Cleaves the DNA backbone by beta-delta elimination to generate a single-strand break at the site of the removed base with both 3'- and 5'-phosphates. The polypeptide is Formamidopyrimidine-DNA glycosylase (Shewanella piezotolerans (strain WP3 / JCM 13877)).